Reading from the N-terminus, the 413-residue chain is FAD-dependent monooxygenase vrtH (413 aa).

The first 23 residues, 1-23, serve as a signal peptide directing secretion; it reads MQRANHTRPVLIIGAGLSGLAIG. N5 carries an N-linked (GlcNAc...) asparagine glycan. 2 residues coordinate FAD: E37 and A48. Residue N94 is glycosylated (N-linked (GlcNAc...) asparagine). R120 is an FAD binding site. N232 carries N-linked (GlcNAc...) asparagine glycosylation. FAD contacts are provided by D327 and G340.

The protein belongs to the paxM FAD-dependent monooxygenase family. FAD is required as a cofactor.

It participates in secondary metabolite biosynthesis; terpenoid biosynthesis. Its function is as follows. FAD-dependent monooxygenase; part of the gene cluster that mediates the biosynthesis of viridicatumtoxin, a tetracycline-like fungal meroterpenoid with a unique, fused spirobicyclic ring system. The first step of the pathway is the production of the malonamoyl-CoA starter unit for the polyketide synthase vrtA. The aldolase vrtJ may be involved in the synthesis of the malonamate substrate for malonamoyl-CoA synthetase vrtB. The polyketide synthase vrtA then may utilize the malonamoyl-CoA starter unit, followed by sequential condensation of eight malonyl-CoA units to form the polyketide backbone. The cyclization of the last ring could be mediated by the lactamase-like protein vrtG. The proposed post-PKS tailoring steps are a hydroxylation at C5 catalyzed the cytochrome P450 monooxygenase vrtE, a hydroxylation at C12a catalyzed by VrtH and/or VrtI, and an O-methylation by the O-methyltransferase vrtF. VrtC is then proposed to catalyze the transfer of a geranyl group synthesized by vrtD to the aromatic C ring of the tetracyclic polyketide intermediate of viridicatumtoxin to yield previridicatumtoxin. Finally, the cytochrome P450 monooxygenase vrtK catalyzes the spirocyclization of the geranyl moiety of previridicatumtoxin to afford viridicatumtoxin. This is FAD-dependent monooxygenase vrtH from Penicillium aethiopicum.